We begin with the raw amino-acid sequence, 133 residues long: Ribosome-binding factor A (133 aa).

It belongs to the RbfA family. In terms of assembly, monomer. Binds 30S ribosomal subunits, but not 50S ribosomal subunits or 70S ribosomes.

Its subcellular location is the cytoplasm. In terms of biological role, one of several proteins that assist in the late maturation steps of the functional core of the 30S ribosomal subunit. Associates with free 30S ribosomal subunits (but not with 30S subunits that are part of 70S ribosomes or polysomes). Required for efficient processing of 16S rRNA. May interact with the 5'-terminal helix region of 16S rRNA. The polypeptide is Ribosome-binding factor A (Bordetella parapertussis (strain 12822 / ATCC BAA-587 / NCTC 13253)).